The sequence spans 332 residues: Large ribosomal subunit protein mL44 (332 aa).

Residues M1–G30 constitute a mitochondrion transit peptide. The RNase III domain occupies D86–L228. The 71-residue stretch at N236 to G306 folds into the DRBM domain.

The protein belongs to the ribonuclease III family. Mitochondrion-specific ribosomal protein mL44 subfamily. As to quaternary structure, component of the mitochondrial large ribosomal subunit (mt-LSU). Mature mammalian 55S mitochondrial ribosomes consist of a small (28S) and a large (39S) subunit. The 28S small subunit contains a 12S ribosomal RNA (12S mt-rRNA) and 30 different proteins. The 39S large subunit contains a 16S rRNA (16S mt-rRNA), a copy of mitochondrial valine transfer RNA (mt-tRNA(Val)), which plays an integral structural role, and 52 different proteins.

It is found in the mitochondrion. Functionally, component of the 39S subunit of mitochondrial ribosome. May have a function in the assembly/stability of nascent mitochondrial polypeptides exiting the ribosome. The protein is Large ribosomal subunit protein mL44 (MRPL44) of Homo sapiens (Human).